The chain runs to 265 residues: Triosephosphate isomerase (265 aa).

13 to 15 (NWK) contributes to the substrate binding site. The active-site Electrophile is His106. Glu179 acts as the Proton acceptor in catalysis. Substrate-binding positions include Gly185, Ser223, and 244 to 245 (GG).

It belongs to the triosephosphate isomerase family. Homodimer.

Its subcellular location is the cytoplasm. The catalysed reaction is D-glyceraldehyde 3-phosphate = dihydroxyacetone phosphate. It functions in the pathway carbohydrate biosynthesis; gluconeogenesis. The protein operates within carbohydrate degradation; glycolysis; D-glyceraldehyde 3-phosphate from glycerone phosphate: step 1/1. Involved in the gluconeogenesis. Catalyzes stereospecifically the conversion of dihydroxyacetone phosphate (DHAP) to D-glyceraldehyde-3-phosphate (G3P). This is Triosephosphate isomerase from Acinetobacter baylyi (strain ATCC 33305 / BD413 / ADP1).